The chain runs to 1478 residues: GTPase-activating protein and VPS9 domain-containing protein 1 (1478 aa).

Residues 147–385 enclose the Ras-GAP domain; that stretch reads SYLLQVLRYL…AAFLDVVIGG (239 aa). Residue Ser227 is modified to Phosphoserine. A phosphothreonine mark is found at Thr390 and Thr458. Tyr460 is subject to Phosphotyrosine. Ser466 bears the Phosphoserine mark. Position 470 is a phosphothreonine (Thr470). 2 positions are modified to phosphoserine: Ser566 and Ser569. Disordered stretches follow at residues 574 to 608, 739 to 820, and 846 to 874; these read GISE…GSNG, ESCS…PPSQ, and HYAR…LPNF. Positions 578 to 588 are enriched in polar residues; that stretch reads GPSNRSNSVSS. Residues Ser742, Ser746, and Ser757 each carry the phosphoserine modification. Residues 758-777 show a composition bias toward polar residues; the sequence is SRPSTPGLSVVSGISATSED. Phosphothreonine is present on Thr762. Ser766 is subject to Phosphoserine. Over residues 778 to 789 the composition is skewed to basic and acidic residues; that stretch reads IPNKIEDLRSEC. Ser876, Ser902, Ser903, Ser908, Ser914, and Ser966 each carry phosphoserine. Basic and acidic residues predominate over residues 889-902; it reads QRHSYPERLVRSRS. Disordered regions lie at residues 889 to 1023 and 1043 to 1064; these read QRHS…PRLS and TSPS…DRDL. Composition is skewed to basic and acidic residues over residues 954-975 and 997-1008; these read DSSR…DRNR and EKQEKDKDDLGP. A compositionally biased stretch (polar residues) spans 1012–1023; it reads STLTDDPSPRLS. A phosphoserine mark is found at Ser1019, Ser1046, Ser1096, and Ser1103. A VPS9 domain is found at 1338–1478; the sequence is ILRDQVLHEH…EFIKTIDDRK (141 aa).

Belongs to the GAPVD1 family. Interacts with TRIP10/CIP4. Interacts with RAB5A. In terms of assembly, (Microbial infection) Interacts with P.falciparum (strain 3D7) CK1. Expressed in erythrocytes (at protein level).

Its subcellular location is the membrane. The protein resides in the endosome. Functionally, acts both as a GTPase-activating protein (GAP) and a guanine nucleotide exchange factor (GEF), and participates in various processes such as endocytosis, insulin receptor internalization or LC2A4/GLUT4 trafficking. Acts as a GEF for the Ras-related protein RAB31 by exchanging bound GDP for free GTP, leading to regulate LC2A4/GLUT4 trafficking. In the absence of insulin, it maintains RAB31 in an active state and promotes a futile cycle between LC2A4/GLUT4 storage vesicles and early endosomes, retaining LC2A4/GLUT4 inside the cells. Upon insulin stimulation, it is translocated to the plasma membrane, releasing LC2A4/GLUT4 from intracellular storage vesicles. Also involved in EGFR trafficking and degradation, possibly by promoting EGFR ubiquitination and subsequent degradation by the proteasome. Has GEF activity for Rab5 and GAP activity for Ras. This is GTPase-activating protein and VPS9 domain-containing protein 1 (GAPVD1) from Homo sapiens (Human).